Consider the following 394-residue polypeptide: MRSLSIFGATGSIGESTFDLVMRKGGPEAFRTVALTGGRNIRRLAEMARALKAELAVTAHEDCLPALREALAGTGTEVAGGAQAIAEAADRPADWTMSAIVGAAGLVPGMRALKHGRTLALANKESLVTAGQLLMRTARENGATILPVDSEHSAVFQALAGEDTACVERVIITASGGPFRDWSLERIRACTVAEAQAHPNWSMGQRISIDSASMFNKALELIETREFFGFEPDRIEAVVHPQSIVHAMVGFCDGGLMAHLGPADMRHAIGFALNWPGRGEVPVARIDLAQIASLTFQRPDEERFPALRLARDVMAARGLSGAAFNAAKEIALDHFIAGRIGFLDMAAVVEETLAGVSTDPLFGKVPDALEEVLAMDHLARRAAEEAAGLRQQKR.

NADPH-binding residues include Thr-10, Gly-11, Ser-12, Ile-13, Gly-38, Arg-39, Asn-40, and Asn-123. A 1-deoxy-D-xylulose 5-phosphate-binding site is contributed by Lys-124. NADPH is bound at residue Glu-125. Asp-149 contacts Mn(2+). Residues Ser-150, Glu-151, Ser-175, and His-198 each contribute to the 1-deoxy-D-xylulose 5-phosphate site. A Mn(2+)-binding site is contributed by Glu-151. An NADPH-binding site is contributed by Gly-204. 4 residues coordinate 1-deoxy-D-xylulose 5-phosphate: Ser-211, Asn-216, Lys-217, and Glu-220. Position 220 (Glu-220) interacts with Mn(2+).

Belongs to the DXR family. Mg(2+) is required as a cofactor. It depends on Mn(2+) as a cofactor.

The catalysed reaction is 2-C-methyl-D-erythritol 4-phosphate + NADP(+) = 1-deoxy-D-xylulose 5-phosphate + NADPH + H(+). It functions in the pathway isoprenoid biosynthesis; isopentenyl diphosphate biosynthesis via DXP pathway; isopentenyl diphosphate from 1-deoxy-D-xylulose 5-phosphate: step 1/6. Catalyzes the NADPH-dependent rearrangement and reduction of 1-deoxy-D-xylulose-5-phosphate (DXP) to 2-C-methyl-D-erythritol 4-phosphate (MEP). This chain is 1-deoxy-D-xylulose 5-phosphate reductoisomerase, found in Cereibacter sphaeroides (strain ATCC 17023 / DSM 158 / JCM 6121 / CCUG 31486 / LMG 2827 / NBRC 12203 / NCIMB 8253 / ATH 2.4.1.) (Rhodobacter sphaeroides).